The chain runs to 316 residues: Pantothenate kinase (316 aa).

Position 95-102 (95-102 (GSVAVGKS)) interacts with ATP.

It belongs to the prokaryotic pantothenate kinase family.

The protein resides in the cytoplasm. It catalyses the reaction (R)-pantothenate + ATP = (R)-4'-phosphopantothenate + ADP + H(+). The protein operates within cofactor biosynthesis; coenzyme A biosynthesis; CoA from (R)-pantothenate: step 1/5. The chain is Pantothenate kinase from Klebsiella pneumoniae subsp. pneumoniae (strain ATCC 700721 / MGH 78578).